A 517-amino-acid polypeptide reads, in one-letter code: Maturase K (517 aa).

It belongs to the intron maturase 2 family. MatK subfamily.

It is found in the plastid. It localises to the chloroplast. Usually encoded in the trnK tRNA gene intron. Probably assists in splicing its own and other chloroplast group II introns. This Palhinhaea cernua (Nodding clubmoss) protein is Maturase K.